Consider the following 1026-residue polypeptide: Multidrug resistance protein MdtC (1026 aa).

11 helical membrane-spanning segments follow: residues 12–32 (VATT…FSLL), 333–353 (EVEQ…FIFL), 360–380 (LIPA…MYLC), 387–407 (LSLM…IVVL), 431–451 (VGFT…PLLL), 463–483 (FAVT…TLTP), 528–548 (WVLA…VSIP), 853–873 (LLLI…LYES), 897–917 (LFGA…IGIV), 953–973 (PIMM…LTHG), and 984–1004 (ITIV…TPVV).

The protein belongs to the resistance-nodulation-cell division (RND) (TC 2.A.6) family. MdtC subfamily. Part of a tripartite efflux system composed of MdtA, MdtB and MdtC. MdtC forms a heteromultimer with MdtB.

It is found in the cell inner membrane. This Serratia proteamaculans (strain 568) protein is Multidrug resistance protein MdtC.